The primary structure comprises 472 residues: Ribosomal protein uS12 methylthiotransferase RimO (472 aa).

An MTTase N-terminal domain is found at 22–133 (PSVAFAHLGC…IVDVLKRVEA (112 aa)). Cys-31, Cys-67, Cys-96, Cys-171, Cys-175, and Cys-178 together coordinate [4Fe-4S] cluster. One can recognise a Radical SAM core domain in the interval 157–386 (TTDQAVAYLK…MALQQPISAE (230 aa)). Residues 389 to 460 (QRWVGRTIDV…VYDLTGQLVD (72 aa)) form the TRAM domain.

Belongs to the methylthiotransferase family. RimO subfamily. Requires [4Fe-4S] cluster as cofactor.

The protein localises to the cytoplasm. It catalyses the reaction L-aspartate(89)-[ribosomal protein uS12]-hydrogen + (sulfur carrier)-SH + AH2 + 2 S-adenosyl-L-methionine = 3-methylsulfanyl-L-aspartate(89)-[ribosomal protein uS12]-hydrogen + (sulfur carrier)-H + 5'-deoxyadenosine + L-methionine + A + S-adenosyl-L-homocysteine + 2 H(+). Functionally, catalyzes the methylthiolation of an aspartic acid residue of ribosomal protein uS12. The polypeptide is Ribosomal protein uS12 methylthiotransferase RimO (Prochlorococcus marinus (strain MIT 9303)).